The following is a 384-amino-acid chain: Sialyltransferase-like protein 3 (384 aa).

At 1 to 5 (MKRRH) the chain is on the cytoplasmic side. The chain crosses the membrane as a helical; Signal-anchor for type II membrane protein span at residues 6 to 26 (WSHPSCGLLLLVAVFCLLLVF). Residues 27–384 (RCSQLRHSGD…FRLPPVSFYR (358 aa)) are Lumenal-facing. N241 carries an N-linked (GlcNAc...) asparagine glycan.

It belongs to the glycosyltransferase 29 family.

It is found in the golgi apparatus membrane. Functionally, possesses sialyltransferase-like activity in vitro. Transfers sialic acid to the glycoprotein asialofetuin. The transferred sialic acid is linked to galactose of Gal-beta-1,3-GalNAc through alpha-2,6-linkage. This is Sialyltransferase-like protein 3 from Oryza sativa subsp. japonica (Rice).